The primary structure comprises 44 residues: Tachystatin-A1 (44 aa).

Cystine bridges form between Cys-4–Cys-24, Cys-11–Cys-29, and Cys-23–Cys-41.

Granular hemocytes, small secretory granules.

The protein localises to the secreted. Exhibits stronger antimicrobial activity against the Gram-positive bacteria (S.aureus (IC(50) is 4.2 ug/ml)) and fungi (C.albicans (IC(50) is 3.0 ug/ml) and P.pastoris (IC(50) is 0.5 ug/ml)) than Gram-negative bacteria (E.coli (IC(50) is 25 ug/ml)). Binds to chitin (8.4 uM are required to obtain 50% of binding). Does not cause hemolysis on sheep erythrocytes. Has no blocking activity on the P-type calcium channel. This is Tachystatin-A1 from Tachypleus tridentatus (Japanese horseshoe crab).